The chain runs to 1006 residues: Beta-galactosidase (1006 aa).

The first 19 residues, 1–19, serve as a signal peptide directing secretion; sequence MKLSSACAIALLAAQAAGA. N-linked (GlcNAc...) asparagine glycosylation occurs at Asn156. The active-site Proton donor is Glu200. The Nucleophile role is filled by Glu298. Residues Asn373, Asn402, Asn422, Asn478, Asn522, Asn622, Asn739, Asn760, Asn777, and Asn805 are each glycosylated (N-linked (GlcNAc...) asparagine).

This sequence belongs to the glycosyl hydrolase 35 family.

It carries out the reaction Hydrolysis of terminal non-reducing beta-D-galactose residues in beta-D-galactosides.. Cleaves beta-linked terminal galactosyl residues from gangliosides, glycoproteins, and glycosaminoglycans. The polypeptide is Beta-galactosidase (lacA) (Aspergillus niger).